Reading from the N-terminus, the 150-residue chain is Triosephosphate isomerase (150 aa).

Substrate contacts are provided by N9 and K11. The active-site Electrophile is H95.

Belongs to the triosephosphate isomerase family. In terms of assembly, homodimer.

The protein localises to the cytoplasm. It catalyses the reaction D-glyceraldehyde 3-phosphate = dihydroxyacetone phosphate. It functions in the pathway carbohydrate biosynthesis; gluconeogenesis. The protein operates within carbohydrate degradation; glycolysis; D-glyceraldehyde 3-phosphate from glycerone phosphate: step 1/1. The sequence is that of Triosephosphate isomerase (tpiA) from Mycoplasmoides pirum (Mycoplasma pirum).